A 351-amino-acid chain; its full sequence is Trans-enoyl reductase grgB (351 aa).

The Enoyl reductase (ER) domain occupies 10 to 346 (GAESGGYRLA…GKVHAKKLVV (337 aa)). Residues 161–164 (ATAT), 184–187 (SPAN), tyrosine 202, 249–250 (LE), and 339–340 (VH) contribute to the NADP(+) site.

It belongs to the zinc-containing alcohol dehydrogenase family.

The protein operates within secondary metabolite biosynthesis. In terms of biological role, trans-enoyl reductase; part of the gene cluster that mediates the biosynthesis of gregatin A, a fungal polyketide featuring an alkylated furanone core. The PKS grgA synthesizes C11 and C4 polyketide chains in the presence and absence of the trans-enoyl reductase grgB, respectively. The polyketide transferase grgF is then responsible for the fusion of the two carbon chains to produce the furanone skeleton of gregatin A. Next, the cytochrome P450 monooxygenase grgG accepts performs the oxidative cyclization to furnish the gregatin scaffold and leads to the formation of desmethylgregatin A. Finally, the O-methyltransferase grgD methylates the carboxyl group of desmethylgregatin A to provide gregatin A. This is Trans-enoyl reductase grgB from Penicillium sp.